A 258-amino-acid polypeptide reads, in one-letter code: Ciliogenesis and planar polarity effector 2 (258 aa).

A small GTPase-like region spans residues 50-258 (SIDTASYKIF…LPNPPESAPE (209 aa)). Positions 64, 65, 67, 68, 69, 70, 82, 84, 87, 176, 178, and 206 each coordinate GTP.

It belongs to the small GTPase superfamily. Rab family. Interacts with FUZ. Associates with the CPLANE (ciliogenesis and planar polarity effectors) complex via its interaction with FUZ.

It is found in the cytoplasm. The protein resides in the cytoskeleton. The protein localises to the cilium basal body. It localises to the microtubule organizing center. Its subcellular location is the centrosome. It is found in the centriole. In terms of biological role, required for efficient primary cilia initiation, regulating a late step in cilia initiation. Plays a role in the final maturation of the mother centriole and ciliary vesicle that allows extension of the ciliary axoneme. The protein is Ciliogenesis and planar polarity effector 2 of Homo sapiens (Human).